The primary structure comprises 416 residues: Adrenocortical dysplasia protein (416 aa).

The PWI signature appears at 11–13 (PWI). A Phosphoserine modification is found at S25. Residues 156-245 (ESASSSAGLT…SSTGSSQKAR (90 aa)) are interaction with POT1. The span at 234 to 251 (ILSSTGSSQKARGTSASP) shows a compositional bias: polar residues. The interval 234-306 (ILSSTGSSQK…TSPPCNSTPS (73 aa)) is disordered. The span at 259 to 272 (SGASVSLLSALATS) shows a compositional bias: low complexity. Residues 273 to 292 (DPGQMDSSQSPPAVGSTSPR) show a composition bias toward polar residues. Phosphoserine occurs at positions 313 and 317. K345 is covalently cross-linked (Glycyl lysine isopeptide (Lys-Gly) (interchain with G-Cter in SUMO2)).

As to quaternary structure, component of the shelterin complex (telosome) composed of TERF1, TERF2, TINF2, TERF2IP ACD and POT1. Forms heterodimers with POT1. Identified in a complex with POT1 and single-stranded telomeric DNA. Interacts with STN1 and TINF2. In terms of tissue distribution, ubiquitous.

The protein resides in the nucleus. It is found in the chromosome. The protein localises to the telomere. Its function is as follows. Component of the shelterin complex (telosome) that is involved in the regulation of telomere length and protection. Shelterin associates with arrays of double-stranded TTAGGG repeats added by telomerase and protects chromosome ends. Without its protective activity, telomeres are no longer hidden from the DNA damage surveillance and chromosome ends are inappropriately processed by DNA repair pathways. Promotes binding of POT1 to single-stranded telomeric DNA. Modulates the inhibitory effects of POT1 on telomere elongation. The ACD-POT1 heterodimer enhances telomere elongation by recruiting telomerase to telomeres and increasing its processivity. May play a role in organogenesis. This chain is Adrenocortical dysplasia protein, found in Mus musculus (Mouse).